A 367-amino-acid chain; its full sequence is MNIKSLLLGSAAALVAASGAQAADAIVAPEPEAVEYVRVCDAYGAGYFYIPGTETCLRVHGYVRYDVKGGDDVYTGSDRKGWDKGARFALMFNTNSETELGTLGTYTQLRFNYTSNNSRHDGQYGDFSDDRDVADGGVSTGTDLQFAYITLGGFKVGIDESEFHTFTGYLGDVINDDVVAAGSYRTGKIAYTFTGGNGFSAVIALEQGGEDVDNDYTIDGYMPHVVGGLKYAGGWGSIAGAVAYDPVIEEWATKVRGDVNITDRFSVWLQGAYSSAATPNQNYGQWGGDWAVWGGAKFIATEKVTFNLQAAHDDWGKTAVTANVAYQLVPGFTITPEVSYTKFGGEWKDTVAEDNAWGGIVRFQRSF.

The signal sequence occupies residues 1 to 22 (MNIKSLLLGSAAALVAASGAQA).

This sequence belongs to the alphaproteobacteria porin family. Monomer.

The protein localises to the cell outer membrane. Its function is as follows. Forms passive diffusion pores that allow small molecular weight hydrophilic materials across the outer membrane. This is Porin Omp2a (omp2a) from Brucella suis.